We begin with the raw amino-acid sequence, 420 residues long: Vitellogenin-3 (420 aa).

The signal sequence occupies residues 1-19 (MMSLRICLLATCLLVAAHA). Thr37 carries the phosphothreonine modification. Phosphoserine is present on residues Ser177 and Ser178. A sulfotyrosine mark is found at Tyr384 and Tyr390. Residues 401 to 420 (GQRSPAHKQAAYHGMHHAQN) form a disordered region.

This sequence belongs to the AB hydrolase superfamily. Lipase family. In terms of processing, tyrosine sulfation occurs in the female only and plays an essential functional role. Synthesized in the fat body and ovarian follicle cells and accumulate in the oocyte.

The protein localises to the secreted. Functionally, vitellogenin is the major yolk protein of eggs where it is used as a food source during embryogenesis. Vitellogenins and their receptor yl/yolkless are required for maintenance of microtubule plus-end orientation towards the posterior pole of oocytes. Involved in polarized localization of germ plasm components, such as osk mRNA and vas protein, to the oocyte posterior cortex. Receptor-mediated endocytosis by yl/yolkless is crucial for actin reorganization, mediated by osk isoform A/Long, required to anchor germ plasm components to the oocyte cortex. The chain is Vitellogenin-3 (Yp3) from Drosophila melanogaster (Fruit fly).